We begin with the raw amino-acid sequence, 84 residues long: uncharacterized protein (84 aa).

Belongs to the csb family.

This is an uncharacterized protein from Dictyostelium discoideum (Social amoeba).